The sequence spans 335 residues: Large ribosomal subunit protein uL10 (335 aa).

Residues 304-335 (GAAAPVEEAPVEEKKEEKKEEAAAPAGLGMLF) form a disordered region. The span at 314-325 (VEEKKEEKKEEA) shows a compositional bias: basic and acidic residues.

Belongs to the universal ribosomal protein uL10 family. Part of the 50S ribosomal subunit. Homodimer, it forms part of the ribosomal stalk which helps the ribosome interact with GTP-bound translation factors. Forms both a pentameric L10(L12)2(L12)2 and heptameric L10(L12)2(L12)2(L12)2 complex, where L10 forms an elongated spine to which the L12 dimers bind in a sequential fashion. The proportion of heptameric complexes increases during cell growth.

Forms part of the ribosomal stalk, playing a central role in the interaction of the ribosome with GTP-bound translation factors. This Methanococcus maripaludis (strain DSM 14266 / JCM 13030 / NBRC 101832 / S2 / LL) protein is Large ribosomal subunit protein uL10.